The sequence spans 360 residues: Peptide chain release factor 1 (360 aa).

Gln-235 is modified (N5-methylglutamine).

This sequence belongs to the prokaryotic/mitochondrial release factor family. Post-translationally, methylated by PrmC. Methylation increases the termination efficiency of RF1.

It localises to the cytoplasm. In terms of biological role, peptide chain release factor 1 directs the termination of translation in response to the peptide chain termination codons UAG and UAA. This chain is Peptide chain release factor 1, found in Delftia acidovorans (strain DSM 14801 / SPH-1).